The following is a 559-amino-acid chain: Potassium-transporting ATPase potassium-binding subunit (559 aa).

A run of 13 helical transmembrane segments spans residues 5 to 25 (GFLL…PLGS), 27 to 47 (LARL…RILW), 63 to 83 (LLAL…LLFW), 132 to 152 (GLTV…FALI), 170 to 190 (LVRI…LFFI), 253 to 273 (LAQM…FGEA), 283 to 303 (LLWA…WAEV), 327 to 347 (FGVL…CGAV), 356 to 376 (ALGG…FGGV), 379 to 399 (GLYG…LMIG), 416 to 436 (MTAL…ALAM), 484 to 504 (LLAF…MAIA), and 524 to 544 (GALF…LTFI).

It belongs to the KdpA family. In terms of assembly, the system is composed of three essential subunits: KdpA, KdpB and KdpC.

It is found in the cell inner membrane. In terms of biological role, part of the high-affinity ATP-driven potassium transport (or Kdp) system, which catalyzes the hydrolysis of ATP coupled with the electrogenic transport of potassium into the cytoplasm. This subunit binds the periplasmic potassium ions and delivers the ions to the membrane domain of KdpB through an intramembrane tunnel. The polypeptide is Potassium-transporting ATPase potassium-binding subunit (Salmonella choleraesuis (strain SC-B67)).